The primary structure comprises 448 residues: Argininosuccinate synthase (448 aa).

ATP is bound by residues 17–25 (AFSGGLDTS) and A43. An L-citrulline-binding site is contributed by Y99. ATP-binding residues include G129 and T131. L-aspartate contacts are provided by T131, N135, and D136. Residue N135 participates in L-citrulline binding. D136 contacts ATP. R139 and S192 together coordinate L-citrulline. D194 is an ATP binding site. L-citrulline contacts are provided by T201, E203, and E280.

Belongs to the argininosuccinate synthase family. Type 2 subfamily. As to quaternary structure, homotetramer.

It is found in the cytoplasm. The enzyme catalyses L-citrulline + L-aspartate + ATP = 2-(N(omega)-L-arginino)succinate + AMP + diphosphate + H(+). The protein operates within amino-acid biosynthesis; L-arginine biosynthesis; L-arginine from L-ornithine and carbamoyl phosphate: step 2/3. This chain is Argininosuccinate synthase, found in Bradyrhizobium sp. (strain ORS 278).